The chain runs to 693 residues: Elongation factor G (693 aa).

The region spanning 8-283 (PQQRNIGIMA…AVVEYLPSPV (276 aa)) is the tr-type G domain. GTP contacts are provided by residues 17–24 (AHIDAGKT), 81–85 (DTPGH), and 135–138 (NKMD).

The protein belongs to the TRAFAC class translation factor GTPase superfamily. Classic translation factor GTPase family. EF-G/EF-2 subfamily.

The protein localises to the cytoplasm. Functionally, catalyzes the GTP-dependent ribosomal translocation step during translation elongation. During this step, the ribosome changes from the pre-translocational (PRE) to the post-translocational (POST) state as the newly formed A-site-bound peptidyl-tRNA and P-site-bound deacylated tRNA move to the P and E sites, respectively. Catalyzes the coordinated movement of the two tRNA molecules, the mRNA and conformational changes in the ribosome. The polypeptide is Elongation factor G (Oleidesulfovibrio alaskensis (strain ATCC BAA-1058 / DSM 17464 / G20) (Desulfovibrio alaskensis)).